Reading from the N-terminus, the 106-residue chain is uncharacterized protein (106 aa).

This sequence belongs to the HesB/IscA family.

This is an uncharacterized protein from Cereibacter sphaeroides (Rhodobacter sphaeroides).